A 171-amino-acid polypeptide reads, in one-letter code: MPLLDSFTVDHTRMAAPAVRVAKTMKTPHGDNITVFDLRFCRPNIEVMPERGIHTLEHLFAGFMRDHLNGDGVEIIDISPMGCRTGFYMSLIGTPDEQRVADSWKAAMADVLKVTDQRKIPELNEFQCGTYEMHSLKEAQEIAQHIVDSDIGINQNDDLALPKDKLAELHI.

Residues histidine 54, histidine 58, and cysteine 128 each coordinate Fe cation.

It belongs to the LuxS family. In terms of assembly, homodimer. It depends on Fe cation as a cofactor.

It catalyses the reaction S-(5-deoxy-D-ribos-5-yl)-L-homocysteine = (S)-4,5-dihydroxypentane-2,3-dione + L-homocysteine. Functionally, involved in the synthesis of autoinducer 2 (AI-2) which is secreted by bacteria and is used to communicate both the cell density and the metabolic potential of the environment. The regulation of gene expression in response to changes in cell density is called quorum sensing. Catalyzes the transformation of S-ribosylhomocysteine (RHC) to homocysteine (HC) and 4,5-dihydroxy-2,3-pentadione (DPD). This Pectobacterium carotovorum subsp. carotovorum (strain PC1) protein is S-ribosylhomocysteine lyase.